We begin with the raw amino-acid sequence, 285 residues long: uncharacterized protein (285 aa).

It belongs to the methyltransferase superfamily.

This is an uncharacterized protein from Mycobacterium tuberculosis (strain CDC 1551 / Oshkosh).